Here is a 303-residue protein sequence, read N- to C-terminus: Glycine--tRNA ligase alpha subunit (303 aa).

This sequence belongs to the class-II aminoacyl-tRNA synthetase family. In terms of assembly, tetramer of two alpha and two beta subunits.

It is found in the cytoplasm. The enzyme catalyses tRNA(Gly) + glycine + ATP = glycyl-tRNA(Gly) + AMP + diphosphate. The sequence is that of Glycine--tRNA ligase alpha subunit from Bordetella pertussis (strain Tohama I / ATCC BAA-589 / NCTC 13251).